A 207-amino-acid polypeptide reads, in one-letter code: MSLLIEQARYHLSAHNARQLPDDGGYEVAFAGRSNAGKSSALNALTRQNALARVSKTPGRTQQLVFFQIQPERYLVDLPGYGYAKVPQDLQAHWQAFIDRYFRTREALRGLVVVMDIRHPLKDYDLQMLGYAAERGLPAHGLLTKADKLGRGQQMQTLQKVKKEVTSRFGDSVTVQTYSGQSRQGVDELRGIVGGWLGLIAEPLAEH.

In terms of domain architecture, EngB-type G spans 24–199; sequence GGYEVAFAGR…RGIVGGWLGL (176 aa). GTP contacts are provided by residues 32 to 39, 59 to 63, 77 to 80, 144 to 147, and 178 to 180; these read GRSNAGKS, GRTQQ, DLPG, TKAD, and YSG. Mg(2+) contacts are provided by Ser-39 and Thr-61.

The protein belongs to the TRAFAC class TrmE-Era-EngA-EngB-Septin-like GTPase superfamily. EngB GTPase family. The cofactor is Mg(2+).

In terms of biological role, necessary for normal cell division and for the maintenance of normal septation. The polypeptide is Probable GTP-binding protein EngB (Xanthomonas oryzae pv. oryzae (strain MAFF 311018)).